The primary structure comprises 872 residues: Alanine--tRNA ligase (872 aa).

Zn(2+) is bound by residues His-567, His-571, Cys-669, and His-673.

The protein belongs to the class-II aminoacyl-tRNA synthetase family. Zn(2+) is required as a cofactor.

The protein resides in the cytoplasm. It catalyses the reaction tRNA(Ala) + L-alanine + ATP = L-alanyl-tRNA(Ala) + AMP + diphosphate. In terms of biological role, catalyzes the attachment of alanine to tRNA(Ala) in a two-step reaction: alanine is first activated by ATP to form Ala-AMP and then transferred to the acceptor end of tRNA(Ala). Also edits incorrectly charged Ser-tRNA(Ala) and Gly-tRNA(Ala) via its editing domain. In Streptococcus pyogenes serotype M18 (strain MGAS8232), this protein is Alanine--tRNA ligase.